Consider the following 239-residue polypeptide: Large ribosomal subunit protein uL1 (239 aa).

It belongs to the universal ribosomal protein uL1 family. In terms of assembly, part of the 50S ribosomal subunit.

Its function is as follows. Binds directly to 23S rRNA. The L1 stalk is quite mobile in the ribosome, and is involved in E site tRNA release. Protein L1 is also a translational repressor protein, it controls the translation of the L11 operon by binding to its mRNA. In Acidothermus cellulolyticus (strain ATCC 43068 / DSM 8971 / 11B), this protein is Large ribosomal subunit protein uL1.